Here is a 174-residue protein sequence, read N- to C-terminus: Peptide deformylase (174 aa).

The Fe cation site is built by Cys-96 and His-138. Residue Glu-139 is part of the active site. A Fe cation-binding site is contributed by His-142.

The protein belongs to the polypeptide deformylase family. It depends on Fe(2+) as a cofactor.

It carries out the reaction N-terminal N-formyl-L-methionyl-[peptide] + H2O = N-terminal L-methionyl-[peptide] + formate. Removes the formyl group from the N-terminal Met of newly synthesized proteins. Requires at least a dipeptide for an efficient rate of reaction. N-terminal L-methionine is a prerequisite for activity but the enzyme has broad specificity at other positions. The chain is Peptide deformylase from Helicobacter pylori (strain P12).